The following is a 448-amino-acid chain: High mobility group B protein 15 (448 aa).

Residues 29–120 (VADPRLFMTS…LLNNYEQIYF (92 aa)) form the ARID domain. A compositionally biased stretch (polar residues) spans 219-236 (PQQSHGVLPNTLNISANP). 3 disordered regions span residues 219–270 (PQQS…RSGY), 333–352 (KKNG…LPEQ), and 366–448 (VEED…AEQN). Residues 244–255 (TKRRRRRKKSEI) show a composition bias toward basic residues. Residues 263-330 (PKPNRSGYNF…RYRTEMEDYR (68 aa)) constitute a DNA-binding region (HMG box). Residues 389–398 (SIETDPELEE) show a composition bias toward acidic residues. A compositionally biased stretch (low complexity) spans 399–412 (PSLNPSGPNLNPNP).

The protein belongs to the HMGB family.

The protein localises to the nucleus. Binds preferentially DNA with A/T-rich content. The protein is High mobility group B protein 15 (HMGB15) of Arabidopsis thaliana (Mouse-ear cress).